The chain runs to 673 residues: Methionine--tRNA ligase (673 aa).

A 'HIGH' region motif is present at residues 14 to 24 (YYPSGKLHIGN). Residues 310–314 (KMSKS) carry the 'KMSKS' region motif. K313 serves as a coordination point for ATP. The 103-residue stretch at 571-673 (VFDKVELKVA…SEAPNGSSIS (103 aa)) folds into the tRNA-binding domain.

This sequence belongs to the class-I aminoacyl-tRNA synthetase family. MetG type 2B subfamily. Homodimer.

The protein localises to the cytoplasm. The enzyme catalyses tRNA(Met) + L-methionine + ATP = L-methionyl-tRNA(Met) + AMP + diphosphate. Its function is as follows. Is required not only for elongation of protein synthesis but also for the initiation of all mRNA translation through initiator tRNA(fMet) aminoacylation. The polypeptide is Methionine--tRNA ligase (metG) (Oceanobacillus iheyensis (strain DSM 14371 / CIP 107618 / JCM 11309 / KCTC 3954 / HTE831)).